We begin with the raw amino-acid sequence, 142 residues long: Non-specific lipid transfer protein GPI-anchored 34 (142 aa).

Positions 1–22 (MAVAVTAVLFLAVVIAPQWTET) are cleaved as a signal peptide. The disordered stretch occupies residues 21-43 (ETKKPPRPSDTSDTSGTSGRDRR). Low complexity predominate over residues 29-38 (SDTSDTSGTS). Cystine bridges form between cysteine 46-cysteine 85, cysteine 57-cysteine 69, cysteine 70-cysteine 106, and cysteine 83-cysteine 114. Asparagine 120 is lipidated: GPI-anchor amidated asparagine. Positions 121–142 (GGATKKIVASMGLFGVVASLFF) are cleaved as a propeptide — removed in mature form.

Belongs to the plant LTP family.

It localises to the cell membrane. In terms of biological role, probable lipid transfer protein. The polypeptide is Non-specific lipid transfer protein GPI-anchored 34 (Arabidopsis thaliana (Mouse-ear cress)).